We begin with the raw amino-acid sequence, 338 residues long: MRKITTSAYMPTEIEVKSVSENVANITAYPFEAGYAVTLAHPLRRLLYTSTVGFAPIGVKIKGVSHEFDSMRGMLEDVAFFIINLKKIRFKLKSGSEREVIEYSFKGPKEITGADLNNDLVEIVNPDAYLATINEDAELNFSVIIQKGIGYVPSEEIREEIEDEYIALDAFFTPVKKAVYEIQNVLVEDDPDYEKIVFTITTDGQVGPVEAFKNCLEAMYQQMSVFKGILDIDVSAPVASSSASGEFSKLLSSVEDLNLSARSFNCLDKAEIRFIGELALMDENELKELKNLGKKSLEEIKAVMEEIGYPVGVDVLKDSKEQLRKKITELKSQMSAKE.

The tract at residues 1 to 230 (MRKITTSAYM…QQMSVFKGIL (230 aa)) is alpha N-terminal domain (alpha-NTD). The interval 247–338 (FSKLLSSVED…ELKSQMSAKE (92 aa)) is alpha C-terminal domain (alpha-CTD).

Belongs to the RNA polymerase alpha chain family. As to quaternary structure, homodimer. The RNAP catalytic core consists of 2 alpha, 1 beta, 1 beta' and 1 omega subunit. When a sigma factor is associated with the core the holoenzyme is formed, which can initiate transcription.

It carries out the reaction RNA(n) + a ribonucleoside 5'-triphosphate = RNA(n+1) + diphosphate. In terms of biological role, DNA-dependent RNA polymerase catalyzes the transcription of DNA into RNA using the four ribonucleoside triphosphates as substrates. This Campylobacter concisus (strain 13826) protein is DNA-directed RNA polymerase subunit alpha.